We begin with the raw amino-acid sequence, 139 residues long: Trafficking protein particle complex subunit 2-like protein (139 aa).

Belongs to the TRAPP small subunits family. Sedlin subfamily. As to quaternary structure, component of the multisubunit TRAPP (transport protein particle) complex, which includes at least TRAPPC2, TRAPPC2L, TRAPPC3, TRAPPC3L, TRAPPC4, TRAPPC5, TRAPPC8, TRAPPC9, TRAPPC10, TRAPPC11 and TRAPPC12. Interacts with the heterodimer TRAPPC3-TRAPPC6A.

The protein resides in the cytoplasm. Its subcellular location is the perinuclear region. It is found in the endoplasmic reticulum. It localises to the golgi apparatus. Functionally, may play a role in vesicular transport from endoplasmic reticulum to Golgi. The sequence is that of Trafficking protein particle complex subunit 2-like protein (Trappc2l) from Rattus norvegicus (Rat).